Here is a 272-residue protein sequence, read N- to C-terminus: Large ribosomal subunit protein uL4 (272 aa).

It belongs to the universal ribosomal protein uL4 family. Part of the 50S ribosomal subunit.

Its function is as follows. One of the primary rRNA binding proteins, this protein initially binds near the 5'-end of the 23S rRNA. It is important during the early stages of 50S assembly. It makes multiple contacts with different domains of the 23S rRNA in the assembled 50S subunit and ribosome. Forms part of the polypeptide exit tunnel. The polypeptide is Large ribosomal subunit protein uL4 (Aeropyrum pernix (strain ATCC 700893 / DSM 11879 / JCM 9820 / NBRC 100138 / K1)).